The chain runs to 278 residues: DNA repair protein RecO (278 aa).

Residues 1–12 show a composition bias toward polar residues; that stretch reads MGTNDALTSTED. The segment at 1-42 is disordered; the sequence is MGTNDALTSTEDAVTAGANDAPLPAPPEPPRKARRATSRTSD.

Belongs to the RecO family.

Involved in DNA repair and RecF pathway recombination. In Burkholderia lata (strain ATCC 17760 / DSM 23089 / LMG 22485 / NCIMB 9086 / R18194 / 383), this protein is DNA repair protein RecO.